The chain runs to 177 residues: Large ribosomal subunit protein uL6 (177 aa).

Belongs to the universal ribosomal protein uL6 family. As to quaternary structure, part of the 50S ribosomal subunit.

Functionally, this protein binds to the 23S rRNA, and is important in its secondary structure. It is located near the subunit interface in the base of the L7/L12 stalk, and near the tRNA binding site of the peptidyltransferase center. This Rickettsia typhi (strain ATCC VR-144 / Wilmington) protein is Large ribosomal subunit protein uL6.